Consider the following 321-residue polypeptide: Cysteine and histidine-rich domain-containing protein 1 (321 aa).

Residues Cys-9, Cys-14, Cys-28, His-31, Cys-46, Cys-47, Cys-63, His-68, Cys-152, Cys-157, Cys-170, His-173, Cys-188, Cys-189, Cys-205, and His-210 each contribute to the Zn(2+) site. 2 CHORD domains span residues 9–68 and 152–210; these read CYHK…RGKH and CRNN…SGEH. Residues 218-308 form the CS domain; that stretch reads VSKFREDWFS…KHGTGWPRLK (91 aa).

Its function is as follows. Regulates centrosome duplication. Controls the secretion of the tyrosine kinase receptor let-23/EGFR from the endoplasmic reticulum and is required for the localization of let-23/EGFR to the plasma membrane of vulval precursor cells. It thus plays a role in positively regulating let/EGFR signaling, and anchor cell and vulval precursor cell alignment. Plays a role in vulval development and morphogenesis. The polypeptide is Cysteine and histidine-rich domain-containing protein 1 (Caenorhabditis elegans).